The sequence spans 181 residues: MTDKSDRTDWVALMRAIRDHRDEAAFAELFQHFAPKVKGFLMKSGSVASQAEECAQDVMATVWQKAHLFDPSRASVATWIFTIARNRRIDGLRKDRQPEPEDLFWGPDSEPDQADVYEMQQENARLGRAIARLPEAQRALIERAFFGDLTHRELAAETGLPLGTIKSRIRLALDRLRQHMS.

Positions 29 to 96 (LFQHFAPKVK…RRIDGLRKDR (68 aa)) are sigma-70 factor domain-2. The Interaction with polymerase core subunit RpoC motif lies at 53–56 (ECAQ). Residues 129-178 (AIARLPEAQRALIERAFFGDLTHRELAAETGLPLGTIKSRIRLALDRLRQ) are sigma-70 factor domain-4. A DNA-binding region (H-T-H motif) is located at residues 151–170 (HRELAAETGLPLGTIKSRIR).

This sequence belongs to the sigma-70 factor family. ECF subfamily. Interacts transiently with the RNA polymerase catalytic core formed by RpoA, RpoB, RpoC and RpoZ (2 alpha, 1 beta, 1 beta' and 1 omega subunit) to form the RNA polymerase holoenzyme that can initiate transcription. Forms a 1:1 complex (via sigma-70 factor domain 4) with anti-sigma factor ChrR; this inhibits the interaction of RpoE with the RNA polymerase catalytic core.

Its function is as follows. Sigma factors are initiation factors that promote the attachment of RNA polymerase to specific initiation sites and are then released. Extracytoplasmic function (ECF) sigma factors are held in an inactive form by a cognate anti-sigma factor until released. Sigma-E controls a transcriptional response to singlet oxygen, a by-product of photosynthesis; its continuous activity requires constant exposure to singlet oxygen. The regulon has about 180 genes that protect against or repair damage induced by singlet oxygen, including itself and rpoH2, a heat shock-responsive sigma factor. The sequence is that of ECF RNA polymerase sigma factor RpoE (rpoE) from Cereibacter sphaeroides (strain ATCC 17023 / DSM 158 / JCM 6121 / CCUG 31486 / LMG 2827 / NBRC 12203 / NCIMB 8253 / ATH 2.4.1.) (Rhodobacter sphaeroides).